We begin with the raw amino-acid sequence, 339 residues long: MTSFEAQQETFDCSEYGNGSCPENERSLGVRAAMYSLMAGAIFITIFGNLVMIISISYFKQLHTPTNLLILSMAVTDFLLGFTIMPYSMVRSVENCWYFGLTFCKIHYSFDLMLSITSIFHLCSVAIDRFYAICHPLHYCTKMTIPVVKRLLLVCWSVPGAFAFGVVFSEAYADGIEGYDILVACSSSCPVMFNKLWGTTLFVAGFFTPSSMMVGIYGKIFAVSKKHARVIDNLPENQNNQMRKDKKAAKTLGIVMGVFLLCWFPCFFTILLDPFLNFSTPAILFDALTWFGYFNSTCNPLIYGFFYPWFRRALRYILLGKIFSSHFHNTNLFTQKETE.

Residues 1-36 (MTSFEAQQETFDCSEYGNGSCPENERSLGVRAAMYS) lie on the Extracellular side of the membrane. Residue asparagine 18 is glycosylated (N-linked (GlcNAc...) asparagine). 2 disulfide bridges follow: cysteine 21/cysteine 185 and cysteine 104/cysteine 189. Residues 37–57 (LMAGAIFITIFGNLVMIISIS) form a helical membrane-spanning segment. Residues 58-67 (YFKQLHTPTN) lie on the Cytoplasmic side of the membrane. The chain crosses the membrane as a helical span at residues 68–88 (LLILSMAVTDFLLGFTIMPYS). At 89-106 (MVRSVENCWYFGLTFCKI) the chain is on the extracellular side. The helical transmembrane segment at 107-127 (HYSFDLMLSITSIFHLCSVAI) threads the bilayer. The Cytoplasmic portion of the chain corresponds to 128 to 150 (DRFYAICHPLHYCTKMTIPVVKR). A helical transmembrane segment spans residues 151 to 171 (LLLVCWSVPGAFAFGVVFSEA). At 172–195 (YADGIEGYDILVACSSSCPVMFNK) the chain is on the extracellular side. A helical transmembrane segment spans residues 196-216 (LWGTTLFVAGFFTPSSMMVGI). The Cytoplasmic segment spans residues 217–251 (YGKIFAVSKKHARVIDNLPENQNNQMRKDKKAAKT). Residues 252–272 (LGIVMGVFLLCWFPCFFTILL) traverse the membrane as a helical segment. The Extracellular portion of the chain corresponds to 273-287 (DPFLNFSTPAILFDA). N-linked (GlcNAc...) asparagine glycosylation is present at asparagine 277. A helical membrane pass occupies residues 288–310 (LTWFGYFNSTCNPLIYGFFYPWF). The Cytoplasmic segment spans residues 311–339 (RRALRYILLGKIFSSHFHNTNLFTQKETE).

It belongs to the G-protein coupled receptor 1 family.

The protein resides in the cell membrane. In terms of biological role, orphan olfactory receptor specific for trace amines. Trace amine compounds are enriched in animal body fluids and act on trace amine-associated receptors (TAARs) to elicit both intraspecific and interspecific innate behaviors. Ligand-binding causes a conformation change that triggers signaling via the G(s)-class of G-proteins which activate adenylate cyclase. May also be required to provide olfactory input into limbic brain areas to regulate emotional behaviors likely via modulation of the dopamine system. The chain is Trace amine-associated receptor 2 (Taar2) from Rattus norvegicus (Rat).